We begin with the raw amino-acid sequence, 312 residues long: Deoxyribonuclease Tat-D (312 aa).

A divalent metal cation-binding residues include glutamate 124, histidine 161, histidine 187, and aspartate 235.

Belongs to the metallo-dependent hydrolases superfamily. TatD-type hydrolase family. It depends on a divalent metal cation as a cofactor.

It localises to the cytoplasm. It is found in the nucleus. Has both endo- and exonuclease activities. Incises double-stranded DNA without obvious specificity via its endonuclease activity and excises the DNA from the 3'-to 5'-end by its exonuclease activity. May have a role in apoptosis. This chain is Deoxyribonuclease Tat-D, found in Schizosaccharomyces pombe (strain 972 / ATCC 24843) (Fission yeast).